The primary structure comprises 213 residues: Uridine kinase (213 aa).

15–22 (GASASGKS) contacts ATP.

The protein belongs to the uridine kinase family.

The protein resides in the cytoplasm. It catalyses the reaction uridine + ATP = UMP + ADP + H(+). The enzyme catalyses cytidine + ATP = CMP + ADP + H(+). The protein operates within pyrimidine metabolism; CTP biosynthesis via salvage pathway; CTP from cytidine: step 1/3. It participates in pyrimidine metabolism; UMP biosynthesis via salvage pathway; UMP from uridine: step 1/1. The polypeptide is Uridine kinase (Yersinia enterocolitica serotype O:8 / biotype 1B (strain NCTC 13174 / 8081)).